The chain runs to 695 residues: MTPIKKVIEYGDRSLVLETGCIARQASGAVVVRYGETVVLVTVVGMKEAAEGRDFFPLTVNYQERTYAAGKIPGGFFKREGRPTEKETLTSRLIDRPLRPLFPKNFINEVQVIATVISSDSENDPDIPSLIGASAALALSGIPFTTPIAAARVGYIDGQYVLNPTLGQMEKSALDLVVAGTEKAVLMVESEAQELPEEIMLGSVMFAHQEMQVVIQAIRELAEEAGKPAWDWKPPIEEEDLKSAVQEVGEARAQEAYQIRSKQERQASLAELRNSIVESLVPEENSRWSREQVLEAIGALEKRLVREQILSGGERIDGRDATAIRPINISTGLLPRTHGSALFTRGETQSLVATTLGTERDAQVIDAIEGERRERFMLHYNFPPYCVGETGFVGSPKRREIGHGRLAKRSLNGVVPDEESFPYVIRVVSEITESNGSSSMATVCGTSLSLMDAGVPIKAPVAGIAMGLIKEKDRFAVLSDILGDEDHLGDMDFKVAGTEKGITALQMDIKIDGITEEIMRTALSQAREGRFYILQKMNEIISTPRQEMSEYAPRMIVFKINPEKIRDVIGKGGATIRALTEETGTTIDIVDDGTVKIFSADKADGQEAKRRVEEIVSDVEVGKIYEGRVSRLMDFGAFVTILPGKDGLLHISQISAERVKNVSDKLSEGDVIRVKVLEVDKQGRVRLSVKAIGNE.

The Mg(2+) site is built by Asp486 and Asp492. A KH domain is found at 553-612 (PRMIVFKINPEKIRDVIGKGGATIRALTEETGTTIDIVDDGTVKIFSADKADGQEAKRRV). Residues 622–690 (GKIYEGRVSR…KQGRVRLSVK (69 aa)) enclose the S1 motif domain.

This sequence belongs to the polyribonucleotide nucleotidyltransferase family. Component of the RNA degradosome, which is a multiprotein complex involved in RNA processing and mRNA degradation. Mg(2+) serves as cofactor.

It is found in the cytoplasm. The enzyme catalyses RNA(n+1) + phosphate = RNA(n) + a ribonucleoside 5'-diphosphate. In terms of biological role, involved in mRNA degradation. Catalyzes the phosphorolysis of single-stranded polyribonucleotides processively in the 3'- to 5'-direction. This chain is Polyribonucleotide nucleotidyltransferase, found in Nitrosococcus oceani (strain ATCC 19707 / BCRC 17464 / JCM 30415 / NCIMB 11848 / C-107).